The sequence spans 884 residues: Probable DNA-directed RNA polymerase subunit beta (884 aa).

It belongs to the RNA polymerase beta chain family.

It carries out the reaction RNA(n) + a ribonucleoside 5'-triphosphate = RNA(n+1) + diphosphate. Functionally, required for late and very late gene expression. May be a component of the novel RNA polymerase activity induced by baculovirus infection. This chain is Probable DNA-directed RNA polymerase subunit beta (LEF-8), found in Orgyia pseudotsugata multicapsid polyhedrosis virus (OpMNPV).